The chain runs to 64 residues: Large ribosomal subunit protein bL33c (64 aa).

This sequence belongs to the bacterial ribosomal protein bL33 family.

The protein localises to the plastid. It is found in the chloroplast. The protein is Large ribosomal subunit protein bL33c (rpl33) of Mesostigma viride (Green alga).